The primary structure comprises 190 residues: Embryo-specific protein ATS3B (190 aa).

A signal peptide spans 1-24; the sequence is MASVRLFFTLISFVFIISTSVYES. Residue Asn37 is glycosylated (N-linked (GlcNAc...) asparagine). Positions 48–158 constitute a PLAT domain; sequence CAYTVIISTS…ESVWYGFNYC (111 aa).

As to quaternary structure, interacts with EULS3 (via N-terminus). As to expression, expressed in roots, rosette leaves, stems, cauline leaves and flowers.

Its subcellular location is the secreted. May play a role during embryo development. This is Embryo-specific protein ATS3B from Arabidopsis thaliana (Mouse-ear cress).